A 67-amino-acid chain; its full sequence is MFGIGIQELLVVLVLVLLVFGANKLPEIGGGLGRAIRNFKRATSEPDEIDITPGKKNGKTDKDDKQA.

The helical transmembrane segment at 1–21 threads the bilayer; that stretch reads MFGIGIQELLVVLVLVLLVFG. Residues 46–67 form a disordered region; sequence PDEIDITPGKKNGKTDKDDKQA. Over residues 58 to 67 the composition is skewed to basic and acidic residues; it reads GKTDKDDKQA.

It belongs to the TatA/E family. As to quaternary structure, the Tat system comprises two distinct complexes: a TatABC complex, containing multiple copies of TatA, TatB and TatC subunits, and a separate TatA complex, containing only TatA subunits. Substrates initially bind to the TatABC complex, which probably triggers association of the separate TatA complex to form the active translocon.

It is found in the cell inner membrane. Its function is as follows. Part of the twin-arginine translocation (Tat) system that transports large folded proteins containing a characteristic twin-arginine motif in their signal peptide across membranes. TatA could form the protein-conducting channel of the Tat system. In Nitratidesulfovibrio vulgaris (strain DSM 19637 / Miyazaki F) (Desulfovibrio vulgaris), this protein is Sec-independent protein translocase protein TatA.